We begin with the raw amino-acid sequence, 246 residues long: Large ribosomal subunit protein uL4 (246 aa).

The tract at residues Ala-37–Asn-103 is disordered. Over residues Pro-92–Asn-103 the composition is skewed to basic and acidic residues.

The protein belongs to the universal ribosomal protein uL4 family. Part of the 50S ribosomal subunit. Interacts weakly with proteins L18e, L24 and L37e. Has been cross-linked to L18e.

One of the primary rRNA binding proteins, this protein initially binds near the 5'-end of the 23S rRNA. It is important during the early stages of 50S assembly. Its function is as follows. Makes multiple contacts with different domains of the 23S rRNA in the assembled 50S subunit. Functionally, forms part of the polypeptide exit tunnel, in which it helps forms a bend with protein L22. Contacts the macrolide antibiotic spiramycin in the polypeptide exit tunnel. The polypeptide is Large ribosomal subunit protein uL4 (rpl4) (Haloarcula marismortui (strain ATCC 43049 / DSM 3752 / JCM 8966 / VKM B-1809) (Halobacterium marismortui)).